The following is a 290-amino-acid chain: MTDEFGMVEPQEGEAFGDEWEEIDVSDDEADRIARRKDRDFDEFRMRLKDADQFKVEQSVFDDATFAAIYKLVQDGHIDAFGGPISTGKEANVFEALGGDDADVAVKIYRINASDFRHMRDYLEGDPRFENIGHDKGQVVRAWVRKEFANLERAQRAGVRVPKPIAVQRNVLVMELVGVVDDRARRLSEVRVENPQTAYEVVREYMRRLHRAGLVHGDLSEYNLIIHDGELVVIDLGQAVTVHHPNAEEFLRRDCRNVANFFRRQGADADGDSLYEFVTGDEGEDGDGDE.

The segment at Met1–Glu22 is disordered. A compositionally biased stretch (acidic residues) spans Gln11–Glu22. Residues Asp79 to Glu290 form the Protein kinase domain. Residues Ile85–Val93, Lys107, Glu175, and Val177 contribute to the ATP site. Catalysis depends on Asp218, which acts as the Proton acceptor. Asn223 and Asp235 together coordinate Mg(2+). Residue Asp235 is the 4-aspartylphosphate intermediate of the active site.

Belongs to the protein kinase superfamily. RIO-type Ser/Thr kinase family. Mg(2+) is required as a cofactor. It depends on Mn(2+) as a cofactor. Autophosphorylated.

The enzyme catalyses L-seryl-[protein] + ATP = O-phospho-L-seryl-[protein] + ADP + H(+). It carries out the reaction L-threonyl-[protein] + ATP = O-phospho-L-threonyl-[protein] + ADP + H(+). The catalysed reaction is ATP + H2O = ADP + phosphate + H(+). Serine/threonine-protein kinase that is able to autophosphorylate as well as to phosphorylate proteasome subunit alpha 1 (PsmA1) in vitro. Despite the protein kinase domain is proposed to act predominantly as an ATPase. The sequence is that of RIO-type serine/threonine-protein kinase Rio1 (rio1) from Haloferax volcanii (strain ATCC 29605 / DSM 3757 / JCM 8879 / NBRC 14742 / NCIMB 2012 / VKM B-1768 / DS2) (Halobacterium volcanii).